The primary structure comprises 423 residues: CDP-diacylglycerol--serine O-phosphatidyltransferase 2 (423 aa).

9 helical membrane-spanning segments follow: residues proline 38–leucine 58, tryptophan 77–isoleucine 97, valine 103–phenylalanine 123, leucine 195–leucine 215, tryptophan 222–methionine 242, phenylalanine 294–leucine 314, tryptophan 319–isoleucine 339, glycine 359–phenylalanine 379, and threonine 390–tryptophan 410.

The protein belongs to the CDP-alcohol phosphatidyltransferase class-I family.

The protein localises to the endoplasmic reticulum membrane. The enzyme catalyses a CDP-1,2-diacyl-sn-glycerol + L-serine = a 1,2-diacyl-sn-glycero-3-phospho-L-serine + CMP + H(+). It functions in the pathway phospholipid metabolism; phosphatidylethanolamine biosynthesis; phosphatidylethanolamine from CDP-diacylglycerol: step 1/2. Its function is as follows. Catalyzes a base-exchange reaction in which the polar head group of phosphatidylethanolamine (PE) or phosphatidylcholine (PC) is replaced by L-serine. The polypeptide is CDP-diacylglycerol--serine O-phosphatidyltransferase 2 (PSS2) (Oryza sativa subsp. japonica (Rice)).